The primary structure comprises 255 residues: Major prion protein (255 aa).

The N-terminal stretch at 1 to 24 (MVKSHIGSWILVLFVAMWSDVGLC) is a signal peptide. Residues 25 to 41 (KKRPKPGGGWNTGGSRY) form an interaction with ADGRG6 region. The interaction with GRB2, ERI3 and SYN1 stretch occupies residues 25-232 (KKRPKPGGGW…ESEAYYQRGA (208 aa)). A disordered region spans residues 28–110 (PKPGGGWNTG…QWNKPSKPKT (83 aa)). 5 tandem repeats follow at residues 54 to 62 (PQGGGGWGQ), 63 to 70 (PHGGGWGQ), 71 to 78 (PHGGGWGQ), 79 to 86 (PHGGGWGQ), and 87 to 94 (PHGGGGWG). A 5 X 8 AA tandem repeats of P-H-G-G-G-W-G-Q region spans residues 54–94 (PQGGGGWGQPHGGGWGQPHGGGWGQPHGGGWGQPHGGGGWG). Residues 55–97 (QGGGGWGQPHGGGWGQPHGGGWGQPHGGGWGQPHGGGGWGQGG) show a composition bias toward gly residues. Positions 64, 65, 66, 72, 73, 74, 80, 81, 82, 88, 90, and 91 each coordinate Cu(2+). N-linked (GlcNAc...) asparagine glycans are attached at residues asparagine 174, asparagine 184, and asparagine 199. Residues cysteine 182 and cysteine 216 are joined by a disulfide bond. Alanine 232 is lipidated: GPI-anchor amidated alanine. A propeptide spans 233–255 (SVILFSSPPVILLVSFLIFLIVG) (removed in mature form).

Belongs to the prion family. In terms of assembly, monomer and homodimer. Has a tendency to aggregate into amyloid fibrils containing a cross-beta spine, formed by a steric zipper of superposed beta-strands. Soluble oligomers may represent an intermediate stage on the path to fibril formation. Copper binding may promote oligomerization. Interacts with GRB2, APP, ERI3/PRNPIP and SYN1. Mislocalized cytosolically exposed PrP interacts with MGRN1; this interaction alters MGRN1 subcellular location and causes lysosomal enlargement. Interacts with APP. Interacts with KIAA1191. Interacts with ADGRG6.

It is found in the cell membrane. Its subcellular location is the golgi apparatus. Its primary physiological function is unclear. May play a role in neuronal development and synaptic plasticity. May be required for neuronal myelin sheath maintenance. May promote myelin homeostasis through acting as an agonist for ADGRG6 receptor. May play a role in iron uptake and iron homeostasis. Soluble oligomers are toxic to cultured neuroblastoma cells and induce apoptosis (in vitro). Association with GPC1 (via its heparan sulfate chains) targets PRNP to lipid rafts. Also provides Cu(2+) or Zn(2+) for the ascorbate-mediated GPC1 deaminase degradation of its heparan sulfate side chains. This is Major prion protein (PRNP) from Canis lupus familiaris (Dog).